The following is a 430-amino-acid chain: Anaerobic glycerol-3-phosphate dehydrogenase subunit B (430 aa).

The protein belongs to the anaerobic G-3-P dehydrogenase subunit B family. In terms of assembly, composed of a catalytic GlpA/B dimer and of membrane bound GlpC. It depends on FMN as a cofactor.

The catalysed reaction is a quinone + sn-glycerol 3-phosphate = dihydroxyacetone phosphate + a quinol. It participates in polyol metabolism; glycerol degradation via glycerol kinase pathway; glycerone phosphate from sn-glycerol 3-phosphate (anaerobic route): step 1/1. In terms of biological role, conversion of glycerol 3-phosphate to dihydroxyacetone. Uses fumarate or nitrate as electron acceptor. This is Anaerobic glycerol-3-phosphate dehydrogenase subunit B from Actinobacillus succinogenes (strain ATCC 55618 / DSM 22257 / CCUG 43843 / 130Z).